A 343-amino-acid polypeptide reads, in one-letter code: WAT1-related protein At1g43650 (343 aa).

The next 10 membrane-spanning stretches (helical) occupy residues 9-29 (MAMV…KVAI), 36-56 (FVFV…FAFF), 65-85 (LSFI…TLSL), 98-118 (TFAA…ALLF), 130-150 (GVAK…FAFV), 175-195 (SVKG…WIIM), 209-229 (LVAL…VAVN), 239-259 (FGLP…LTYW), 272-292 (FTAL…SFLF), and 296-316 (FYLG…LGLW). EamA domains are found at residues 16-139 (IVYA…GSMV) and 188-313 (CWCL…GLYL).

Belongs to the drug/metabolite transporter (DMT) superfamily. Plant drug/metabolite exporter (P-DME) (TC 2.A.7.4) family.

It is found in the membrane. This is WAT1-related protein At1g43650 from Arabidopsis thaliana (Mouse-ear cress).